The primary structure comprises 82 residues: Small ribosomal subunit protein bS16 (82 aa).

The protein belongs to the bacterial ribosomal protein bS16 family.

The protein is Small ribosomal subunit protein bS16 of Enterobacter sp. (strain 638).